A 348-amino-acid chain; its full sequence is Uroporphyrinogen decarboxylase (348 aa).

Residues 27–31 (RQAGR), Phe46, Asp76, Tyr152, Ser207, and His320 contribute to the substrate site.

The protein belongs to the uroporphyrinogen decarboxylase family. Homodimer.

Its subcellular location is the cytoplasm. It catalyses the reaction uroporphyrinogen III + 4 H(+) = coproporphyrinogen III + 4 CO2. Its pathway is porphyrin-containing compound metabolism; protoporphyrin-IX biosynthesis; coproporphyrinogen-III from 5-aminolevulinate: step 4/4. In terms of biological role, catalyzes the decarboxylation of four acetate groups of uroporphyrinogen-III to yield coproporphyrinogen-III. The polypeptide is Uroporphyrinogen decarboxylase (Bacillus thuringiensis (strain Al Hakam)).